A 453-amino-acid chain; its full sequence is Odorant receptor 83a (453 aa).

Over 1–28 (MKSTFKEERIKDDSKRRDLFVFVRQTMC) the chain is Cytoplasmic. A helical membrane pass occupies residues 29 to 49 (IAAMYPFGYYVNGSGVLAVLV). The Extracellular segment spans residues 50–85 (RFCDLTYELFNYFVSVHIAGLYICTIYINYGQGDLD). The helical transmembrane segment at 86–106 (FFVNCLIQTIIYLWTIAMKLY) threads the bilayer. The Cytoplasmic portion of the chain corresponds to 107–148 (FRRFRPGLLNTILSNINDEYETRSAVGFSFVTMAGSYRMSKL). Residues 149-169 (WIKTYVYCCYIGTIFWLALPI) form a helical membrane-spanning segment. Topologically, residues 170–203 (AYRDRSLPLACWYPFDYTQPGVYEVVFLLQAMGQ) are extracellular. A helical transmembrane segment spans residues 204-224 (IQVAASFASSSGLHMVLCVLI). The Cytoplasmic portion of the chain corresponds to 225–322 (SGQYDVLFCS…ALKKIESFYS (98 aa)). The chain crosses the membrane as a helical span at residues 323–343 (PIWFVKIGEVTFLMCLVAFVS). The Extracellular portion of the chain corresponds to 344–359 (TKSTAANSFMRMVSLG). A helical transmembrane segment spans residues 360 to 380 (QYLLLVLYELFIICYFADIVF). At 381 to 408 (QNSQRCGEALWRSPWQRHLKDVRSDYMF) the chain is on the cytoplasmic side. Residues 409–429 (FMLNSRRQFQLTAGKISNLNV) form a helical membrane-spanning segment. Topologically, residues 430–453 (DRFRGTITTAFSFLTLLQKMDARE) are extracellular.

Belongs to the insect chemoreceptor superfamily. Heteromeric odorant receptor channel (TC 1.A.69) family. Or2a subfamily. Interacts with Orco. Complexes exist early in the endomembrane system in olfactory sensory neurons (OSNs), coupling these complexes to the conserved ciliary trafficking pathway.

The protein localises to the cell membrane. In terms of biological role, odorant receptor which mediates acceptance or avoidance behavior, depending on its substrates. The odorant receptor repertoire encodes a large collection of odor stimuli that vary widely in identity, intensity, and duration. May form a complex with Orco to form odorant-sensing units, providing sensitive and prolonged odorant signaling and calcium permeability. Involved in the behavioral responses to pentanol, ethyl acetate, and propyl acetate. In Drosophila melanogaster (Fruit fly), this protein is Odorant receptor 83a (Or83a).